The primary structure comprises 144 residues: Large ribosomal subunit protein uL11 (144 aa).

Belongs to the universal ribosomal protein uL11 family. In terms of assembly, part of the ribosomal stalk of the 50S ribosomal subunit. Interacts with L10 and the large rRNA to form the base of the stalk. L10 forms an elongated spine to which L12 dimers bind in a sequential fashion forming a multimeric L10(L12)X complex. One or more lysine residues are methylated.

In terms of biological role, forms part of the ribosomal stalk which helps the ribosome interact with GTP-bound translation factors. The sequence is that of Large ribosomal subunit protein uL11 from Rickettsia bellii (strain OSU 85-389).